The primary structure comprises 248 residues: MALLEICCYSMECALTAQRNGADRIELCAAPKEGGLTPSFGILRSVREHITIPVHPIIRPRGGDFYYTDGEFAAMLEDIRLVRELGFPGLVTGVLTVDGDVDMSRMEKIMTAAGPLAVTFHRAFDMCANPFNALKNLADAGVARVLTSGQKADAAQGLSIIMELIAQGDAPIIMAGAGVRANNLQNFLDAGVREVHSSAGVLLPSPMRYRNQGLSMSADIQADEYSRYRVEGAAVAEMKGIIVRHQAK.

It belongs to the CutC family. As to quaternary structure, homodimer.

The protein resides in the cytoplasm. The protein is PF03932 family protein CutC of Salmonella paratyphi A (strain AKU_12601).